The primary structure comprises 618 residues: Serine/threonine-protein kinase TNNI3K (618 aa).

Gly-2 carries N-myristoyl glycine lipidation. The stretch at 21–51 (SESYVITIERLEDDLKIKEKELTELRNIFGS) forms a coiled coil. ANK repeat units lie at residues 66–96 (NGLSLLHLCCICGGNKSHIRTLMLKGLRPSR), 100–129 (NGFTALHLAVYKDNAELITSLLHGGADIQQ), 133–162 (GGLTALHIATIAGHLEAADVLLQHGANVNI), 166–195 (VFFTPLHIAAYYGHEQVTRLLLKFGADVNV), 199–228 (VGDRPLHLASAKGFLNIAKLLMEEGSKADV), 234–263 (EDHVPLHFCSRFGHHDIVKYLLQNDLEVQP), 269–298 (YGDTPLHLACYNGKFEVAKEIIQISGTESL), 304–335 (FSETAFHSACTYGKSIDLVKFLLDQNVININH), 339–368 (DGHTGLHSACYHGHIHLVQFLLDNGADMNL), and 381–410 (DEQTCLMWAYEKGHDAIVTLLKHYKRPQDE). One can recognise a Protein kinase domain in the interval 463–618 (IEFHEIIGSG…TAHTIYLLAP (156 aa)). ATP is bound by residues 469–477 (IGSGSFGKV) and Lys-490. Asp-588 (proton acceptor) is an active-site residue.

This sequence belongs to the protein kinase superfamily. TKL Ser/Thr protein kinase family. MAP kinase kinase kinase subfamily. Interacts with TNNI3, ACTC, ACTA1, MYBPC3, AIP, FABP3 and HADHB. It depends on Mg(2+) as a cofactor. Autophosphorylated.

The protein resides in the nucleus. It localises to the cytoplasm. The enzyme catalyses L-seryl-[protein] + ATP = O-phospho-L-seryl-[protein] + ADP + H(+). It catalyses the reaction L-threonyl-[protein] + ATP = O-phospho-L-threonyl-[protein] + ADP + H(+). Functionally, may play a role in cardiac physiology. The protein is Serine/threonine-protein kinase TNNI3K of Pongo abelii (Sumatran orangutan).